Reading from the N-terminus, the 186-residue chain is Alkyl hydroperoxide reductase AhpD (186 aa).

Residue Cys132 is the Proton donor of the active site. Cys132 and Cys135 are disulfide-bonded. Residue Cys135 is the Cysteine sulfenic acid (-SOH) intermediate of the active site.

The protein belongs to the AhpD family.

It carries out the reaction N(6)-[(R)-dihydrolipoyl]-L-lysyl-[lipoyl-carrier protein] + a hydroperoxide = N(6)-[(R)-lipoyl]-L-lysyl-[lipoyl-carrier protein] + an alcohol + H2O. Functionally, antioxidant protein with alkyl hydroperoxidase activity. Required for the reduction of the AhpC active site cysteine residues and for the regeneration of the AhpC enzyme activity. This chain is Alkyl hydroperoxide reductase AhpD, found in Anaeromyxobacter dehalogenans (strain 2CP-C).